The chain runs to 537 residues: Chaperonin GroEL (537 aa).

ATP-binding positions include 29–32, 86–90, glycine 413, 477–479, and aspartate 493; these read TLGP, DGTTT, and NAA.

The protein belongs to the chaperonin (HSP60) family. As to quaternary structure, forms a cylinder of 14 subunits composed of two heptameric rings stacked back-to-back. Interacts with the co-chaperonin GroES.

It is found in the cytoplasm. It carries out the reaction ATP + H2O + a folded polypeptide = ADP + phosphate + an unfolded polypeptide.. In terms of biological role, together with its co-chaperonin GroES, plays an essential role in assisting protein folding. The GroEL-GroES system forms a nano-cage that allows encapsulation of the non-native substrate proteins and provides a physical environment optimized to promote and accelerate protein folding. The chain is Chaperonin GroEL from Parascardovia denticolens (Bifidobacterium denticolens).